The sequence spans 123 residues: MANSRRVEKLAALLKREISELLVNGIRDERIHQAMITITSVEVSGDLQHARIFISLFGEEKKKDQVLVGLEEAKGFIRAELARRLQMRRSPELVFKIDKGMTKGPEVLDLLNALELERKSKDL.

This sequence belongs to the RbfA family. As to quaternary structure, monomer. Binds 30S ribosomal subunits, but not 50S ribosomal subunits or 70S ribosomes.

The protein resides in the cytoplasm. Its function is as follows. One of several proteins that assist in the late maturation steps of the functional core of the 30S ribosomal subunit. Associates with free 30S ribosomal subunits (but not with 30S subunits that are part of 70S ribosomes or polysomes). Required for efficient processing of 16S rRNA. May interact with the 5'-terminal helix region of 16S rRNA. The protein is Ribosome-binding factor A of Prochlorococcus marinus (strain NATL1A).